The chain runs to 356 residues: DNA-directed RNA polymerase subunit alpha (356 aa).

Residues 1–259 (MIKAAATLKS…KLMTACLTTL (259 aa)) are alpha N-terminal domain (alpha-NTD). The interval 277 to 356 (FVQVNYNKME…STYGIELKED (80 aa)) is alpha C-terminal domain (alpha-CTD).

It belongs to the RNA polymerase alpha chain family. As to quaternary structure, in plastids the minimal PEP RNA polymerase catalytic core is composed of four subunits: alpha, beta, beta', and beta''. When a (nuclear-encoded) sigma factor is associated with the core the holoenzyme is formed, which can initiate transcription.

The protein resides in the plastid. The protein localises to the chloroplast. It catalyses the reaction RNA(n) + a ribonucleoside 5'-triphosphate = RNA(n+1) + diphosphate. DNA-dependent RNA polymerase catalyzes the transcription of DNA into RNA using the four ribonucleoside triphosphates as substrates. This is DNA-directed RNA polymerase subunit alpha from Ostreococcus tauri.